Consider the following 518-residue polypeptide: Bifunctional methyltransferase (518 aa).

The hemK stretch occupies residues 1–300 (MQYSIKQILN…SHNRVIEISP (300 aa)). Positions 1–302 (MQYSIKQILN…NRVIEISPIN (302 aa)) are RF MTase. Residues 140 to 144 (GTGSG), D163, W192, N207, E347, E372, N399, and D421 contribute to the S-adenosyl-L-methionine site. 207–210 (NPPY) contributes to the substrate binding site. Positions 301–518 (INLNRSYARR…MILQHALTGH (218 aa)) are tRNA (guanine-N(7)-)-methyltransferase. The segment at 305–518 (RSYARRIGKS…MILQHALTGH (214 aa)) is tRNA MTase. D421 is an active-site residue. The substrate site is built by K425 and D457.

In the C-terminal section; belongs to the class I-like SAM-binding methyltransferase superfamily. TrmB family. This sequence in the N-terminal section; belongs to the protein N5-glutamine methyltransferase family. PrmC subfamily.

The enzyme catalyses L-glutaminyl-[peptide chain release factor] + S-adenosyl-L-methionine = N(5)-methyl-L-glutaminyl-[peptide chain release factor] + S-adenosyl-L-homocysteine + H(+). The catalysed reaction is guanosine(46) in tRNA + S-adenosyl-L-methionine = N(7)-methylguanosine(46) in tRNA + S-adenosyl-L-homocysteine. Its function is as follows. Methylates the class 1 translation termination release factors RF1/PrfA and RF2/PrfB on the glutamine residue of the universally conserved GGQ motif. In terms of biological role, catalyzes the formation of N(7)-methylguanine at position 46 (m7G46) in tRNA. The chain is Bifunctional methyltransferase (prmC/trmB) from Rickettsia typhi (strain ATCC VR-144 / Wilmington).